A 103-amino-acid polypeptide reads, in one-letter code: Co-chaperonin GroES (103 aa).

The protein belongs to the GroES chaperonin family. Heptamer of 7 subunits arranged in a ring. Interacts with the chaperonin GroEL.

Its subcellular location is the cytoplasm. Functionally, together with the chaperonin GroEL, plays an essential role in assisting protein folding. The GroEL-GroES system forms a nano-cage that allows encapsulation of the non-native substrate proteins and provides a physical environment optimized to promote and accelerate protein folding. GroES binds to the apical surface of the GroEL ring, thereby capping the opening of the GroEL channel. In Gloeothece citriformis (strain PCC 7424) (Cyanothece sp. (strain PCC 7424)), this protein is Co-chaperonin GroES.